The sequence spans 113 residues: uncharacterized protein (113 aa).

Residues 1 to 38 form the signal peptide; the sequence is MVKIERKATDSAYHEFTKILTSSAQLMAFLNQSDFVKA.

This is an uncharacterized protein from Haemophilus influenzae (strain ATCC 51907 / DSM 11121 / KW20 / Rd).